A 493-amino-acid polypeptide reads, in one-letter code: MLFAQLVILVIIVMLFLCRFANKLRGLPPGPTPWPFIGNTFQVPEDRIDLIINEFKKKYGGIFTLWLPFPTIVICDYDMLKRNIVKNGESFSGRPDTFIMDMLVQGNYGLFFMENNWWKAQRRFTTHIFRSLGVGQAGTQDTIASLASGLVEKIDGQKDKPIELRPLLVHVVGNVIHKHLFGFTREWNETEILDFHVAINDVLEHFTSPKTQLLDAWPWLAYLDKPLSLGIPRTTRANDAIIQNLEQALAKHKTGINYDEEPSSYMDAFLKEMKIRAAENALEDGFTEKQLIVAIYDLYSAGMETIIIVLRFAFLYLVNNPETQKRIHEELDRNVGRERQVVMDDQKHLPYTCAFLQEVYRLGYVLPVNFLRCTLTDVEDCEGYRLNAGTRVIAQFQSVHVDKKHFPDPEHFNPDRFLNSRGEYIRDDRVNPFSMGKRSCLGENLARMEVFLYFCTLMQNFEWHTDGPYAPPIDVITSSLRAPKPFTVRASRR.

Transmembrane regions (helical) follow at residues 1-21, 60-80, and 290-310; these read MLFA…CRFA, GGIF…YDML, and QLIV…IIVL. Cys440 lines the heme pocket.

Belongs to the cytochrome P450 family. Requires heme as cofactor.

Its subcellular location is the membrane. Functionally, cytochromes P450 are a group of heme-thiolate monooxygenases. They oxidize a variety of structurally unrelated compounds, including steroids, fatty acids, and xenobiotics. The sequence is that of Probable cytochrome P450 CYP36A1 (cyp-36A1) from Caenorhabditis elegans.